Here is a 201-residue protein sequence, read N- to C-terminus: Putative manganese efflux pump MntP 2 (201 aa).

Helical transmembrane passes span 3 to 23 (LISV…VSIT), 39 to 59 (IGLF…SIGI), 65 to 85 (IAAL…GKMI), 116 to 136 (LILL…SFAF), 141 to 161 (IINT…IGVM), and 176 to 196 (ILGG…HTNI).

Belongs to the MntP (TC 9.B.29) family.

It is found in the cell membrane. In terms of biological role, probably functions as a manganese efflux pump. The protein is Putative manganese efflux pump MntP 2 of Clostridium botulinum (strain Hall / ATCC 3502 / NCTC 13319 / Type A).